We begin with the raw amino-acid sequence, 321 residues long: Peroxidase 5 (321 aa).

A signal peptide spans 1–24 (MERFSLRFVLMMVSIILTSSICQA). Gln-25 is subject to Pyrrolidone carboxylic acid. Intrachain disulfides connect Cys-35–Cys-115, Cys-68–Cys-73, Cys-121–Cys-317, and Cys-201–Cys-227. Residue His-66 is the Proton acceptor of the active site. The Ca(2+) site is built by Asp-67, Val-70, Gly-72, Asp-74, and Ser-76. Residue Pro-164 participates in substrate binding. Residue His-194 coordinates heme b. A Ca(2+)-binding site is contributed by Thr-195. Asn-211 carries an N-linked (GlcNAc...) asparagine glycan. Ca(2+) is bound by residues Asp-240, Thr-243, and Asp-248. A glycan (N-linked (GlcNAc...) asparagine) is linked at Asn-285.

The protein belongs to the peroxidase family. Classical plant (class III) peroxidase subfamily. The cofactor is heme b. Ca(2+) is required as a cofactor.

It is found in the secreted. The enzyme catalyses 2 a phenolic donor + H2O2 = 2 a phenolic radical donor + 2 H2O. Its function is as follows. Removal of H(2)O(2), oxidation of toxic reductants, biosynthesis and degradation of lignin, suberization, auxin catabolism, response to environmental stresses such as wounding, pathogen attack and oxidative stress. These functions might be dependent on each isozyme/isoform in each plant tissue. The protein is Peroxidase 5 (PER5) of Arabidopsis thaliana (Mouse-ear cress).